Here is a 284-residue protein sequence, read N- to C-terminus: MLRYKAIVEYDGTNFVGWQRQQNGLSIQQLLEDKISTFTKQTVNLIAAGRTDAGVHALGQVVHFDLIAPNNSKDLACINKETDNKEVSKQNNTTTTIDSLKKMLPCRYNAYKLMSAVNYLLKPHRIILTSCEITTLQFHARFSAKARHYKYRIINRTVPSVIEQNRTWWIKPPLNVIDMIDASQHLIGKHDFTSFRSSACQAKSPLKTLTKIEVDTTNYPEIQIYFSAPSFLHHMVRNIVGTLVYIGLCKISPAAIKTILFAKNRAMAGPTAPSSGLYFVKVDY.

The active-site Nucleophile is Asp52. Substrate is bound at residue Tyr149.

This sequence belongs to the tRNA pseudouridine synthase TruA family. In terms of assembly, homodimer.

It carries out the reaction uridine(38/39/40) in tRNA = pseudouridine(38/39/40) in tRNA. Functionally, formation of pseudouridine at positions 38, 39 and 40 in the anticodon stem and loop of transfer RNAs. In Orientia tsutsugamushi (strain Boryong) (Rickettsia tsutsugamushi), this protein is tRNA pseudouridine synthase A.